The chain runs to 144 residues: Granulocyte-macrophage colony-stimulating factor (144 aa).

The signal sequence occupies residues 1–17; that stretch reads MWLQNLLFLGTVVCSIS. An O-linked (GalNAc...) serine glycan is attached at S22. The O-linked (GalNAc...) threonine glycan is linked to T27. An N-linked (GlcNAc...) asparagine glycan is attached at N44. 2 disulfides stabilise this stretch: C71-C113 and C105-C138.

The protein belongs to the GM-CSF family. In terms of assembly, monomer. The signaling GM-CSF receptor complex is a dodecamer of two head-to-head hexamers of two alpha, two beta, and two ligand subunits.

It localises to the secreted. In terms of biological role, cytokine that stimulates the growth and differentiation of hematopoietic precursor cells from various lineages, including granulocytes, macrophages, eosinophils and erythrocytes. The sequence is that of Granulocyte-macrophage colony-stimulating factor (CSF2) from Canis lupus familiaris (Dog).